The sequence spans 232 residues: Nuclear transcription factor Y subunit nfyc-1 (232 aa).

The interval 191 to 232 (TVPTTSTNGPGHMSEDSFQDPNMHSDFHQRTSNSSVNRSHHN) is disordered. The span at 220–232 (RTSNSSVNRSHHN) shows a compositional bias: polar residues.

This sequence belongs to the NFYC/HAP5 subunit family. Forms two NF-Y heterotrimeric transcription factor complexes: the nfya-1-NF-Y complex is composed of nfya-1, nfyb-1 and nfyc-1, and the nfya-2-NF-Y complex is composed of nfya-2, nfyb-1 and nfyc-1. Interacts with nfyb-1; the interaction is direct and is required for the interaction with either nfya-1 or nfya-2, and subsequent binding of the complex to the 5'-CCAAT-3' box motif in DNA. In terms of tissue distribution, expressed in certain parts of the gonads with high expression in fertilized oocytes in the uterus and mature oocytes from the distal to the proximal arm of the gonad, but weak expression in the syncytial ovaries and immature oocytes at the beginning of the proximal arm of the gonad. Expressed in the excretory cell, secretory cells in the pharyngeal terminal bulb wall, in the small ganglia surrounding the pharynx and in the neurons running anteriorly to the sensory organs in the head. Not expressed in the intestine, the hypodermis or body wall muscle surrounding the pseudocoelomic space.

The protein resides in the nucleus. Its subcellular location is the cytoplasm. It is found in the perikaryon. In terms of biological role, component of sequence-specific heterotrimeric transcription factor (nfya-1-NF-Y and nfya-2-NF-Y) complexes which specifically recognize a 5'-CCAAT-3' box motif found in the promoters of its target genes to regulate their expression and control cellular identity in particular tissue types. In association with the components in the NF-Y complexes, represses the expression of the T-box transcription factor tbx-2 throughout larval development, which most likely restricts its expression to certain tissues. May act to repress txb-2 expression in conjunction with tbx-2 itself, which has an autoregulatory role. In association with the components in the nfya-1-NF-Y complex, negatively regulates the expression of the homeobox protein egl-5 to spatially restrict its expression in tissues such as the head. May regulate egl-5 expression in association with the mes-2-mes-3-mes-6 complex. This Caenorhabditis elegans protein is Nuclear transcription factor Y subunit nfyc-1.